The sequence spans 151 residues: Dehydrin Rab16D (151 aa).

Residues 1–138 (MEYQGQHGGH…TADAGGEKKG (138 aa)) are disordered. Basic and acidic residues predominate over residues 39-51 (EPAREDKKTDGVL). Low complexity-rich tracts occupy residues 90 to 105 (GNNQ…TTTG) and 117 to 132 (IATG…TADA).

This sequence belongs to the plant dehydrin family.

This is Dehydrin Rab16D (RAB16D) from Oryza sativa subsp. indica (Rice).